The primary structure comprises 991 residues: MDFNDKLATLTRVCLARRVSAGRFVKLTRHLMENEGASEVNPKALFGANTFDLLFFAYVHKLAFEDSLLPPYKLLAYLKVCAYGRLPQLLMYLGKQLQEMDTDVDLGANAGYSYLIQVLVSFMKDAFASGGGMRKRYGTSIAKGFGFFAEVLLTRLGDRMAGVTAPEITSQLAELAKVDATIAGRLGEAWMGLKGAAKTSTTAETVAATVATPTTLTRLYRDTLFESLMFGDSSWNQYGSLFQLISTVYAMPGYPTLASQPVQSRLAIIGEVICAMFDCQSITFLRRDSAKRNNYWKSCIRTRIPRIIRTLFPHSTPEEKTLIQSVVSKSVLGLDQPTVTLIRLSIGSDELDDMFSSFPGGLDVDIRHELVAACISEGVLPKDAFNAIFKDSGISVEALDYADELTIDGQAMSLDTMAEQLSYENLEIGSVSDCLMSKVVAQMEKLSGNAQEALTKRLLVCLADFVQAGNVRPVRYMCQALALNTTAVDIMALCVDPMLLLKALVDCIELWREEEDEANYQEAYTDFGAIVVFAITLKQRYHLDLALLNQFGTLFVGAPSPSSTMPSHELFLSQLLTESDSSQRIFHLSDEQNDQLSGWATALYDAGGISDDLMRSSSVKQFFLVTPAIFQQSMLAHEKGLLSLSTFKGGLEYFLQPFLLGSTVGVFKWLSEQLWVHSQKGHDEQMSTVISVCSTLILTDNTDIEVLSPIHQMVLAICADEMYEALDMALRAGYMVENRVFEFLEPFVSAINYNLNVQRTVSSSGFRSQKGIGMSGGGGSGTKEQTWKYGASMIATIKEQVSSLISWSQNQYTGPPFGYELVMILSSVDTLGHKYVLEQLIEEIALADSNGTGHYTVEVVATIATVAFIISTSVKSPRPFSDSQLILKSLDNMVNDSTGKSKDICVLLQSKILQLLTTAGYKPDGSRLDGKPHAKEDYSFVVNRTGEVENKPINDSSQNSNTDNQFMDTNMFGGDDFTMDFGGDIDMPDLF.

This sequence belongs to the Mediator complex subunit 5 family. In terms of assembly, component of the Mediator complex.

The protein resides in the nucleus. Its function is as follows. Component of the Mediator complex, a coactivator involved in the regulated transcription of nearly all RNA polymerase II-dependent genes. Mediator functions as a bridge to convey information from gene-specific regulatory proteins to the basal RNA polymerase II transcription machinery. Mediator is recruited to promoters by direct interactions with regulatory proteins and serves as a scaffold for the assembly of a functional preinitiation complex with RNA polymerase II and the general transcription factors. The chain is Mediator of RNA polymerase II transcription subunit 5 (NUT1) from Yarrowia lipolytica (strain CLIB 122 / E 150) (Yeast).